A 413-amino-acid polypeptide reads, in one-letter code: MSDFHNIRSRRRIPEASSYSTVDFDYDPDQKNHTSAVAPTSFAYSSLTTVFNASASQLWNSAQEALVSSYDTAEGTESIDADRSKVVETLESLSIFGNPLDHIIITMPSRDRTSEFRATAKSYEMKAAANGIRPQPKHEMLSESVQFNQLAKRIGKELSQTCAKMEKLAEYAKKKSCYEERSQIDHLSSIVKSDITGLNKQIGQLQEFSKRRAGNMKNQNSGHIQLVVVGLQSKLANVGKDYQSVLEISTETMKAEKNRRDKFSSGAAVPMGLPSSSSGANVRSKLLQDDEQHGSSSIALDMGALSNMQSQQTMQQRDSSLEYAQARSNTMATIEGSISELGQIFSQLASLVSEQGEMITRIDSNVEDTALNIDMAHSELVRYLQNISKNRWLMIQVFGVLMVFFVVFVLFLT.

At 1–391 the chain is on the cytoplasmic side; the sequence is MSDFHNIRSR…RYLQNISKNR (391 aa). The tract at residues 257–290 is disordered; that stretch reads KNRRDKFSSGAAVPMGLPSSSSGANVRSKLLQDD. Residues 321–383 enclose the t-SNARE coiled-coil homology domain; that stretch reads LEYAQARSNT…DMAHSELVRY (63 aa). A helical; Anchor for type IV membrane protein membrane pass occupies residues 392 to 412; sequence WLMIQVFGVLMVFFVVFVLFL. Position 413 (threonine 413) is a topological domain, extracellular.

The protein belongs to the syntaxin family.

It localises to the membrane. Functionally, potentially involved in docking of synaptic vesicles at presynaptic active zones. This chain is Putative syntaxin-5 (syx-5), found in Caenorhabditis elegans.